A 631-amino-acid polypeptide reads, in one-letter code: Fusexin 1 (631 aa).

Positions 1–19 (MRRAALILAFVLFIGLSSA) are cleaved as a signal peptide. Residues 20 to 90 (TVTSADSITY…THQDSKLKYS (71 aa)) form a domain I N-terminus region. Residues 20 to 537 (TVTSADSITY…NLFGGSGSGD (518 aa)) are Extracellular-facing. The segment at 91–170 (TSTSDELRDI…KLATPAYIDN (80 aa)) is domain II N-terminus. Residues D112, S146, Y149, and D150 each contribute to the Ca(2+) site. Cysteines 125 and 155 form a disulfide. The tract at residues 143–148 (SVTSPV) is fusion loop, required for fusogenic activity, not required for membrane surface localization. The interval 171 to 224 (PDEIFTAKAELQAGDKTIQSATLSNGDAGDGTVTDLGDSKISWNGNLDLGASEP) is domain I central section. The domain II C-terminus stretch occupies residues 225 to 316 (ENSRVIALYS…KDSSLDTGSF (92 aa)). The tract at residues 317–348 (VYDTPELLSYPSFTVYVDAGENGYIEVTKPTG) is domain I C-terminus. The tract at residues 349-455 (DPDIISTSST…SVSVTGIQQS (107 aa)) is domain III. 3 cysteine pairs are disulfide-bonded: C389–C432, C457–C477, and C490–C506. The disordered stretch occupies residues 443–467 (DSTSVSVTGIQQSECNPGDQRREKN). The domain IV, required for fusogenic activity stretch occupies residues 456-509 (ECNPGDQRREKNENDRWEIYTCQDNGLTYEYDVTCAEDEKAVAQGDNQFSCEKQ). The tract at residues 510 to 537 (DDDSGGGDNTGSDSGLFSNLFGGSGSGD) is stem. The chain crosses the membrane as a helical span at residues 538–558 (LLTQVHTALSILAGLVAGFFG). Topologically, residues 559-590 (YRGARWIHGETDIKGGFKLESRNVSRVKRGSP) are cytoplasmic. A helical membrane pass occupies residues 591 to 611 (VAGIVGAVLGFVVGYGVASVF). H612 is a topological domain (extracellular). Residues 613–630 (PVVQIIVVLGIAVGLYYF) traverse the membrane as a helical segment. A topological domain (cytoplasmic) is located at residue R631.

This sequence belongs to the HAP2/GCS1 family. Fusexin 1 subfamily. In terms of assembly, monomer in solution, crystallizes as a trimer in high salt (2.5 M NaCl, 0.2 M CaCl(2)). The trimer is stabilized by interdomain contacts and numerous Ca(2+) and Na(+) ions.

The protein localises to the cell surface. It localises to the cell membrane. Its function is as follows. Exhibits fusogenic activity. Mediates cell-cell fusion in mammalian cells when present in both cells (bilateral fusion). In Uncultured archaeon, this protein is Fusexin 1.